The following is a 312-amino-acid chain: uncharacterized protein (312 aa).

This is an uncharacterized protein from Escherichia coli O157:H7.